A 414-amino-acid polypeptide reads, in one-letter code: Esterase FrsA (414 aa).

The protein belongs to the FrsA family.

It carries out the reaction a carboxylic ester + H2O = an alcohol + a carboxylate + H(+). In terms of biological role, catalyzes the hydrolysis of esters. The sequence is that of Esterase FrsA from Escherichia coli O157:H7.